The chain runs to 361 residues: 3-dehydroquinate synthase (361 aa).

NAD(+) contacts are provided by residues 106–110, 130–131, Lys-143, and Lys-152; these read GVVGD and TT. Residues Glu-185, His-248, and His-265 each contribute to the Zn(2+) site.

Belongs to the sugar phosphate cyclases superfamily. Dehydroquinate synthase family. NAD(+) is required as a cofactor. Requires Co(2+) as cofactor. It depends on Zn(2+) as a cofactor.

Its subcellular location is the cytoplasm. The enzyme catalyses 7-phospho-2-dehydro-3-deoxy-D-arabino-heptonate = 3-dehydroquinate + phosphate. Its pathway is metabolic intermediate biosynthesis; chorismate biosynthesis; chorismate from D-erythrose 4-phosphate and phosphoenolpyruvate: step 2/7. Catalyzes the conversion of 3-deoxy-D-arabino-heptulosonate 7-phosphate (DAHP) to dehydroquinate (DHQ). In Leptospira interrogans serogroup Icterohaemorrhagiae serovar copenhageni (strain Fiocruz L1-130), this protein is 3-dehydroquinate synthase.